A 246-amino-acid polypeptide reads, in one-letter code: tRNA (guanine-N(1)-)-methyltransferase (246 aa).

S-adenosyl-L-methionine-binding positions include Gly114 and 134–139 (IGDYIL). Basic and acidic residues predominate over residues 219–231 (LRRPDLWERHEGA). Positions 219–246 (LRRPDLWERHEGARAQSPSGARRQKKER) are disordered.

This sequence belongs to the RNA methyltransferase TrmD family. Homodimer.

It localises to the cytoplasm. The catalysed reaction is guanosine(37) in tRNA + S-adenosyl-L-methionine = N(1)-methylguanosine(37) in tRNA + S-adenosyl-L-homocysteine + H(+). Functionally, specifically methylates guanosine-37 in various tRNAs. This chain is tRNA (guanine-N(1)-)-methyltransferase, found in Rhizorhabdus wittichii (strain DSM 6014 / CCUG 31198 / JCM 15750 / NBRC 105917 / EY 4224 / RW1) (Sphingomonas wittichii).